A 569-amino-acid chain; its full sequence is Proline--tRNA ligase (569 aa).

Belongs to the class-II aminoacyl-tRNA synthetase family. ProS type 1 subfamily. As to quaternary structure, homodimer.

The protein resides in the cytoplasm. The enzyme catalyses tRNA(Pro) + L-proline + ATP = L-prolyl-tRNA(Pro) + AMP + diphosphate. Its function is as follows. Catalyzes the attachment of proline to tRNA(Pro) in a two-step reaction: proline is first activated by ATP to form Pro-AMP and then transferred to the acceptor end of tRNA(Pro). As ProRS can inadvertently accommodate and process non-cognate amino acids such as alanine and cysteine, to avoid such errors it has two additional distinct editing activities against alanine. One activity is designated as 'pretransfer' editing and involves the tRNA(Pro)-independent hydrolysis of activated Ala-AMP. The other activity is designated 'posttransfer' editing and involves deacylation of mischarged Ala-tRNA(Pro). The misacylated Cys-tRNA(Pro) is not edited by ProRS. The sequence is that of Proline--tRNA ligase from Campylobacter hominis (strain ATCC BAA-381 / DSM 21671 / CCUG 45161 / LMG 19568 / NCTC 13146 / CH001A).